The sequence spans 324 residues: Protoheme IX farnesyltransferase 2 (324 aa).

9 helical membrane-spanning segments follow: residues 39-59 (LIKP…MLLA), 63-83 (IPSP…AGSA), 115-135 (HALV…WATT), 137-157 (LLSA…YTLV), 166-186 (IVWG…GVTG), 192-212 (ALVM…SLAM), 239-259 (IVVF…ATGW), 260-280 (LYTA…HRLH), and 302-322 (LMIV…VLGW).

This sequence belongs to the UbiA prenyltransferase family. Protoheme IX farnesyltransferase subfamily.

Its subcellular location is the cell membrane. The catalysed reaction is heme b + (2E,6E)-farnesyl diphosphate + H2O = Fe(II)-heme o + diphosphate. It functions in the pathway porphyrin-containing compound metabolism; heme O biosynthesis; heme O from protoheme: step 1/1. Functionally, converts heme B (protoheme IX) to heme O by substitution of the vinyl group on carbon 2 of heme B porphyrin ring with a hydroxyethyl farnesyl side group. This is Protoheme IX farnesyltransferase 2 from Saccharopolyspora erythraea (strain ATCC 11635 / DSM 40517 / JCM 4748 / NBRC 13426 / NCIMB 8594 / NRRL 2338).